A 345-amino-acid polypeptide reads, in one-letter code: D-fructose 1,6-bisphosphatase class 2/sedoheptulose 1,7-bisphosphatase (345 aa).

Residues Asp-33, Glu-57, Asp-97, and Glu-100 each coordinate Mn(2+). Residues 100-102 (EGT), Tyr-131, 176-178 (RDR), and 198-200 (DGD) each bind substrate. Glu-225 lines the Mn(2+) pocket.

Belongs to the FBPase class 2 family. As to quaternary structure, homotetramer. Requires Mn(2+) as cofactor.

The catalysed reaction is beta-D-fructose 1,6-bisphosphate + H2O = beta-D-fructose 6-phosphate + phosphate. It catalyses the reaction D-sedoheptulose 1,7-bisphosphate + H2O = D-sedoheptulose 7-phosphate + phosphate. It functions in the pathway carbohydrate biosynthesis; Calvin cycle. In terms of biological role, catalyzes the hydrolysis of fructose 1,6-bisphosphate (Fru 1,6-P2) and sedoheptulose 1,7-bisphosphate (Sed 1,7-P2) to fructose 6-phosphate and sedoheptulose 7-phosphate, respectively. The protein is D-fructose 1,6-bisphosphatase class 2/sedoheptulose 1,7-bisphosphatase of Nostoc sp. (strain PCC 7120 / SAG 25.82 / UTEX 2576).